The primary structure comprises 151 residues: MQVILLEKVVNLGNLGEIVRVRDGYARNFLIPQKKARRATDAALKEFEARRAELEKIQAEKLAAAEALGGRLAGYQLKIVQKAGVDGRLFGSVTNADVAEGLKKAGFEAVEKAQVRLPNGPLKAVGEYPIQVALHADVTVDVTVVVEGDIA.

The protein belongs to the bacterial ribosomal protein bL9 family.

Functionally, binds to the 23S rRNA. The polypeptide is Large ribosomal subunit protein bL9 (Bordetella petrii (strain ATCC BAA-461 / DSM 12804 / CCUG 43448)).